The chain runs to 88 residues: Small ribosomal subunit protein eS25B (88 aa).

Belongs to the eukaryotic ribosomal protein eS25 family. Component of the small ribosomal subunit (SSU). Mature yeast ribosomes consist of a small (40S) and a large (60S) subunit. The 40S small subunit contains 1 molecule of ribosomal RNA (18S rRNA) and at least 33 different proteins. The large 60S subunit contains 3 rRNA molecules (25S, 5.8S and 5S rRNA) and at least 46 different proteins.

The protein resides in the cytoplasm. Functionally, component of the ribosome, a large ribonucleoprotein complex responsible for the synthesis of proteins in the cell. The small ribosomal subunit (SSU) binds messenger RNAs (mRNAs) and translates the encoded message by selecting cognate aminoacyl-transfer RNA (tRNA) molecules. The large subunit (LSU) contains the ribosomal catalytic site termed the peptidyl transferase center (PTC), which catalyzes the formation of peptide bonds, thereby polymerizing the amino acids delivered by tRNAs into a polypeptide chain. The nascent polypeptides leave the ribosome through a tunnel in the LSU and interact with protein factors that function in enzymatic processing, targeting, and the membrane insertion of nascent chains at the exit of the ribosomal tunnel. The chain is Small ribosomal subunit protein eS25B (rps2501) from Schizosaccharomyces pombe (strain 972 / ATCC 24843) (Fission yeast).